A 293-amino-acid polypeptide reads, in one-letter code: Ribokinase (293 aa).

Substrate is bound by residues 11 to 13, 39 to 43, and Glu139; these read SMD and GKGAN. Residues Asn183 and 210-215 each bind ATP; that span reads TEGKQG. K(+) is bound by residues Asp236 and Thr238. Residues 241-242 and Asn266 each bind ATP; that span reads GD. Asp242 lines the substrate pocket. Asp242 functions as the Proton acceptor in the catalytic mechanism. K(+) is bound by residues Ser272, Ser275, and Gly277.

This sequence belongs to the carbohydrate kinase PfkB family. Ribokinase subfamily. Homodimer. Mg(2+) is required as a cofactor.

It is found in the cytoplasm. It catalyses the reaction D-ribose + ATP = D-ribose 5-phosphate + ADP + H(+). Its pathway is carbohydrate metabolism; D-ribose degradation; D-ribose 5-phosphate from beta-D-ribopyranose: step 2/2. Activated by a monovalent cation that binds near, but not in, the active site. The most likely occupant of the site in vivo is potassium. Ion binding induces a conformational change that may alter substrate affinity. In terms of biological role, catalyzes the phosphorylation of ribose at O-5 in a reaction requiring ATP and magnesium. The resulting D-ribose-5-phosphate can then be used either for sythesis of nucleotides, histidine, and tryptophan, or as a component of the pentose phosphate pathway. The chain is Ribokinase from Bacillus subtilis (strain 168).